The sequence spans 615 residues: Elongation factor 4 (615 aa).

One can recognise a tr-type G domain in the interval 17 to 198; that stretch reads ASIRNFCIIA…RVSRTIPAPV (182 aa). Residues 29–34 and 145–148 each bind GTP; these read DHGKST and NKID.

It belongs to the TRAFAC class translation factor GTPase superfamily. Classic translation factor GTPase family. LepA subfamily.

It localises to the cell membrane. It catalyses the reaction GTP + H2O = GDP + phosphate + H(+). Functionally, required for accurate and efficient protein synthesis under certain stress conditions. May act as a fidelity factor of the translation reaction, by catalyzing a one-codon backward translocation of tRNAs on improperly translocated ribosomes. Back-translocation proceeds from a post-translocation (POST) complex to a pre-translocation (PRE) complex, thus giving elongation factor G a second chance to translocate the tRNAs correctly. Binds to ribosomes in a GTP-dependent manner. The chain is Elongation factor 4 from Clavibacter sepedonicus (Clavibacter michiganensis subsp. sepedonicus).